A 470-amino-acid chain; its full sequence is Diaminobutyrate--2-oxoglutarate aminotransferase (470 aa).

N6-(pyridoxal phosphate)lysine is present on lysine 304.

The protein belongs to the class-III pyridoxal-phosphate-dependent aminotransferase family. Pyridoxal 5'-phosphate is required as a cofactor.

The enzyme catalyses L-2,4-diaminobutanoate + 2-oxoglutarate = L-aspartate 4-semialdehyde + L-glutamate. It functions in the pathway siderophore biosynthesis; rhizobactin biosynthesis. In Rhizobium meliloti (strain 1021) (Ensifer meliloti), this protein is Diaminobutyrate--2-oxoglutarate aminotransferase (rhbA).